We begin with the raw amino-acid sequence, 345 residues long: Hemin transport protein HmuS (345 aa).

It to Y.enterocolitica HemS.

In terms of biological role, part of the binding-protein-dependent transport system for hemin. The polypeptide is Hemin transport protein HmuS (hmuS) (Yersinia pestis).